The sequence spans 478 residues: MALPCKTGAAFKKYLLLLAQENCEFRLPEIKSLLSLYGGHFNNLQDEHGKSPFCILNLPSEEMARKLMKRTVCAKSVFELWGHGKTFMEFQQSVLSYPLENMMSYLQPNSTYKIIIHSFNKTLTQKEKLEKINTMEFIPFQGKVNLQNAENIFYLLEDYGSDPNKAPNEPFEIFFGRWIADGQRELINSYSVKKRHFIGNTSMDAGLSFIMANHARVKPNDVVFDPFVGTGGLLVSSAHFGAYVCGTEIDYNTVHGLGKATRMNQKWRGPDENIRANLRQYGLEKYYLDVLVSDASKPVWRKAPLFDAIITDPPYGIRESTRKTGTQKEIIKTELFPESHVPVQLNYHLSDIFSDLFAFASEFLVTGGRLVYWLPVYRPEYTEEVLPRHPCLKLISNCEQMLSSHTSRRLITMEKVKEFEEKYQYAHLGEGQNLPYKGHNSFREKYFSGLKKRTAREERARSEMANAENVKSKGKEDV.

A disordered region spans residues 457–478 (EERARSEMANAENVKSKGKEDV).

The protein belongs to the class I-like SAM-binding methyltransferase superfamily. TRM11 methyltransferase family. As to quaternary structure, part of the heterodimeric TRMT11-TRM112 methyltransferase complex; this complex forms an active tRNA methyltransferase, where TRMT112 acts as an activator of the catalytic subunit TRMT11.

It localises to the cytoplasm. It catalyses the reaction guanosine(10) in tRNA + S-adenosyl-L-methionine = N(2)-methylguanosine(10) in tRNA + S-adenosyl-L-homocysteine + H(+). Functionally, catalytic subunit of the TRMT11-TRM112 methyltransferase complex, that specifically mediates the S-adenosyl-L-methionine-dependent N(2)-methylation of guanosine nucleotide at position 10 (m2G10) in tRNAs. This is one of the major tRNA (guanine-N(2))-methyltransferases. In Xenopus laevis (African clawed frog), this protein is tRNA (guanine(10)-N(2))-methyltransferase TRMT11 (trmt11.L).